The chain runs to 438 residues: DNA primase small subunit (438 aa).

Residues Glu-63, Asp-127, and Asp-129 contribute to the active site. The short motif at 139–149 is the Zinc knuckle motif element; it reads CCSGAGVCLKC.

This sequence belongs to the eukaryotic-type primase small subunit family. In terms of assembly, heterodimer of a catalytic subunit Prim1 and a regulatory subunit Prim2, also known as the DNA primase complex. Component of the alpha DNA polymerase complex (also known as the alpha DNA polymerase-primase complex) consisting of four subunits: the catalytic subunit PolA1, the regulatory subunit PolA2, and the primase complex subunits Prim1 and Prim2 respectively. PolA1 associates with the DNA primase complex before association with PolA2. Mg(2+) serves as cofactor. The cofactor is Mn(2+). Expressed in embryos (at protein level).

With respect to regulation, the presence of the regulatory subunit Prim2 accelerates the kinetics of initiation and primer extension. Catalytic subunit of the DNA primase complex and component of the DNA polymerase alpha complex (also known as the alpha DNA polymerase-primase complex) which play an essential role in the initiation of DNA synthesis. During the S phase of the cell cycle, the DNA polymerase alpha complex (composed of a catalytic subunit PolA1, an accessory subunit PolA2 and two primase subunits, the catalytic subunit Prim1 and the regulatory subunit Prim2) is recruited to DNA at the replicative forks. The primase subunit of the polymerase alpha complex initiates DNA synthesis by oligomerising short RNA primers on both leading and lagging strands. These primers are initially extended by the polymerase alpha catalytic subunit and subsequently transferred to polymerase delta and polymerase epsilon for processive synthesis on the lagging and leading strand, respectively. In the primase complex, both subunits are necessary for the initial di-nucleotide formation, but the extension of the primer depends only on the catalytic subunit. Can add both ribo- and deoxynucleotides during elongation of the primers. Binds single stranded DNA. In Drosophila melanogaster (Fruit fly), this protein is DNA primase small subunit.